The following is a 527-amino-acid chain: FHA domain-containing protein FhaA (527 aa).

Position 116 is a phosphothreonine (Thr116). Residues 119 to 426 (FRARGTVNPD…APGGYSGYGQ (308 aa)) are disordered. The span at 170-188 (RPDEYYDDRYARPQEDPRG) shows a compositional bias: basic and acidic residues. Composition is skewed to low complexity over residues 199-209 (RGGYPPETGGY) and 256-266 (YQDQGRGYPDQ). Residues 271–283 (YPPPYEQRPPVSP) show a composition bias toward pro residues. Residues 284 to 299 (GPAAGYGAPGYDQGYR) show a composition bias toward low complexity. Residues 300 to 322 (QSGGYGPSPGGGQPGYGGYGEYG) are compositionally biased toward gly residues. Residues 345–366 (RPAYPDQGGYDQGYQQGATTYG) are compositionally biased toward low complexity. The region spanning 455–504 (NIIGRGQDAQFRLPDTGVSRRHLEIRWDGQVALLADLNSTNGTTVNNAPV) is the FHA domain.

Interacts with (phosphorylated) MviN and (phosphorylated) PknB via the FHA domain. Binds to the PknB juxtamembrane domain with an affinity that is modulated by the degree and the pattern of phosphorylation of this juxtamembrane domain. Phosphorylated by PknB.

The protein resides in the cytoplasm. Its function is as follows. Regulates cell growth and peptidoglycan synthesis by binding to MviN. May inhibit the late stages of peptidoglycan synthesis. The chain is FHA domain-containing protein FhaA (fhaA) from Mycobacterium tuberculosis (strain ATCC 25618 / H37Rv).